Here is a 260-residue protein sequence, read N- to C-terminus: DNA repair protein RecO (260 aa).

Belongs to the RecO family.

Its function is as follows. Involved in DNA repair and RecF pathway recombination. This is DNA repair protein RecO from Levilactobacillus brevis (strain ATCC 367 / BCRC 12310 / CIP 105137 / JCM 1170 / LMG 11437 / NCIMB 947 / NCTC 947) (Lactobacillus brevis).